The primary structure comprises 295 residues: Glycine--tRNA ligase alpha subunit (295 aa).

Belongs to the class-II aminoacyl-tRNA synthetase family. Tetramer of two alpha and two beta subunits.

The protein localises to the cytoplasm. The enzyme catalyses tRNA(Gly) + glycine + ATP = glycyl-tRNA(Gly) + AMP + diphosphate. This Rhodospirillum rubrum (strain ATCC 11170 / ATH 1.1.1 / DSM 467 / LMG 4362 / NCIMB 8255 / S1) protein is Glycine--tRNA ligase alpha subunit.